Here is a 175-residue protein sequence, read N- to C-terminus: Large ribosomal subunit protein uL10 (175 aa).

The protein belongs to the universal ribosomal protein uL10 family. Part of the ribosomal stalk of the 50S ribosomal subunit. The N-terminus interacts with L11 and the large rRNA to form the base of the stalk. The C-terminus forms an elongated spine to which L12 dimers bind in a sequential fashion forming a multimeric L10(L12)X complex.

Functionally, forms part of the ribosomal stalk, playing a central role in the interaction of the ribosome with GTP-bound translation factors. The protein is Large ribosomal subunit protein uL10 of Cupriavidus taiwanensis (strain DSM 17343 / BCRC 17206 / CCUG 44338 / CIP 107171 / LMG 19424 / R1) (Ralstonia taiwanensis (strain LMG 19424)).